We begin with the raw amino-acid sequence, 92 residues long: Small ribosomal subunit protein uS19 (92 aa).

The protein belongs to the universal ribosomal protein uS19 family.

Its function is as follows. Protein S19 forms a complex with S13 that binds strongly to the 16S ribosomal RNA. This Borrelia recurrentis (strain A1) protein is Small ribosomal subunit protein uS19.